We begin with the raw amino-acid sequence, 1191 residues long: MPVQAAQWTEFLSCPICYNEFDENVHKPISLGCSHTVCKTCLNKLHRKACPFDQTAINTDIDVLPVNFALLQLVGAQVPDHQSIKLSNLGENKHYEVAKKCVEDLALYLKPLSGGKGVASLNQSALSRPMQRKLVTLVNCQLVEEEGRVRAMRAARSLGERTVTELILQHQNPQQLSANLWAAVRARGCQFLGPAMQEEALKLVLLALEDGSALSRKVLVLFVVQRLEPRFPQASKTSIGHVVQLLYRASCFKVTKRDEDSSLMQLKEEFRSYEALRREHDAQIVHIAMEAGLRISPEQWSSLLYGDLAHKSHMQSIIDKLQSPESFAKSVQELTIVLQRTGDPANLNRLRPHLELLANIDPNPDAVSPTWEQLENAMVAVKTVVHGLVDFIQNYSRKGHETPQPQPNSKYKTSMCRDLRQQGGCPRGTNCTFAHSQEELEKYRLRNKKINATVRTFPLLNKVGVNNTVTTTAGNVISVIGSTETTGKIVPSTNGISNAENSVSQLISRSTDSTLRALETVKKVGKVGANGQNAAGPSADSVTENKIGSPPKTPVSNVAATSAGPSNVGTELNSVPQKSSPFLTRVPVYPPHSENIQYFQDPRTQIPFEVPQYPQTGYYPPPPTVPAGVAPCVPRFVRSNNVPESSLPPASMPYADHYSTFSPRDRMNSSPYQPPPPQPYGPVPPVPSGMYAPVYDSRRIWRPPMYQRDDIIRSNSLPPMDVMHSSVYQTSLRERYNSLDGYYSVACQPPSEPRTTVPLPREPCGHLKTSCEEQIRRKPDQWAQYHTQKAPLVSSTLPVATQSPTPPSPLFSVDFRADFSESVSGTKFEEDHLSHYSPWSCGTIGSCINAIDSEPKDVIANSNAVLMDLDSGDVKRRVHLFETQRRTKEEDPIIPFSDGPIISKWGAISRSSRTGYHTTDPVQATASQGSATKPISVSDYVPYVNAVDSRWSSYGNEATSSAHYVERDRFIVTDLSGHRKHSSTGDLLSLELQQAKSNSLLLQREANALAMQQKWNSLDEGRHLTLNLLSKEIELRNGELQSDYTEDATDTKPDRDIELELSALDTDEPDGQSEPIEEILDIQLGISSQNDQLLNGMAVENGHPVQQHQKEPPKQKKQSLGEDHVILEEQKTILPVTSCFSQPLPVSISNASCLPITTSVSAGNLILKTHVMSEDKNDFLKPVANGKMVNS.

Zn(2+) is bound by residues Cys-14, Cys-17, Cys-33, His-35, Cys-38, Cys-50, and Asp-53. Residues 14–54 (CPICYNEFDENVHKPISLGCSHTVCKTCLNKLHRKACPFDQ) form an RING-type; degenerate zinc finger. Positions 91–170 (ENKHYEVAKK…RTVTELILQH (80 aa)) are HEPN-N. Residues 171–325 (QNPQQLSANL…SIIDKLQSPE (155 aa)) form an ROQ region. The segment at 326 to 396 (SFAKSVQELT…GLVDFIQNYS (71 aa)) is HEPN-C. The segment at 410 to 438 (KYKTSMCRDLRQQGGCPRGTNCTFAHSQE) adopts a C3H1-type zinc-finger fold. 2 disordered regions span residues 528–576 (GANG…NSVP) and 644–680 (ESSL…PQPY). Polar residues predominate over residues 530-546 (NGQNAAGPSADSVTENK). Phosphoserine is present on Ser-549. Over residues 554–576 (PVSNVAATSAGPSNVGTELNSVP) the composition is skewed to polar residues. Phosphoserine is present on residues Ser-808, Ser-983, and Ser-1119.

Interacts with EDC4. Interacts with CCR4-NOT deadenylase complex. Interacts with MAP3K5; the interaction is probably stimulus-dependent. Proteolytically cleaved after Arg-509 and Arg-585 by MALT1 in activated CD4(+) T cells; cleavage at Arg-509 and Arg-585 is critical for promoting RC3H1 degradation in response to T-cell receptor (TCR) stimulation, and hence is necessary for prolonging the stability of a set of mRNAs controlling Th17 cell differentiation. Expressed in spleen, testis, ovary and small intestine.

It is found in the cytoplasm. Its subcellular location is the P-body. The enzyme catalyses S-ubiquitinyl-[E2 ubiquitin-conjugating enzyme]-L-cysteine + [acceptor protein]-L-lysine = [E2 ubiquitin-conjugating enzyme]-L-cysteine + N(6)-ubiquitinyl-[acceptor protein]-L-lysine.. The protein operates within protein modification; protein ubiquitination. With respect to regulation, binding to dsRNA, but not CDE RNA, crosstalks with the E3 ubiquitin ligase activity and may inhibit ubiquitination. In terms of biological role, post-transcriptional repressor of mRNAs containing a conserved stem loop motif, called constitutive decay element (CDE), which is often located in the 3'-UTR, as in HMGXB3, ICOS, IER3, NFKBID, NFKBIZ, PPP1R10, TNF and in many more mRNAs. Binds to CDE and promotes mRNA deadenylation and degradation. This process does not involve miRNAs. In follicular helper T (Tfh) cells, represses of ICOS and TNFRSF4 expression, thus preventing spontaneous Tfh cell differentiation, germinal center B-cell differentiation in the absence of immunization and autoimmunity. In resting or LPS-stimulated macrophages, controls inflammation by suppressing TNF expression. Also recognizes CDE in its own mRNA and in that of paralogous RC3H1, possibly leading to feedback loop regulation. miRNA-binding protein that regulates microRNA homeostasis. Enhances DICER-mediated processing of pre-MIR146a but reduces mature MIR146a levels through an increase of 3' end uridylation. Both inhibits ICOS mRNA expression and they may act together to exert the suppression. Acts as a ubiquitin E3 ligase. Pairs with E2 enzymes UBE2B, UBE2D2, UBE2E2, UBE2E3, UBE2G2, UBE2K and UBE2Q2 and produces polyubiquitin chains. Shows the strongest activity when paired with UBE2N:UBE2V1 or UBE2N:UBE2V2 E2 complexes and generate both short and long polyubiquitin chains. Involved in the ubiquitination of MAP3K5. Able to interact with double-stranded RNA (dsRNA). This Homo sapiens (Human) protein is Roquin-2 (RC3H2).